The sequence spans 254 residues: UPF0173 protein YddR (254 aa).

Belongs to the UPF0173 family.

The sequence is that of UPF0173 protein YddR (yddR) from Bacillus subtilis (strain 168).